Consider the following 254-residue polypeptide: MFFKKNLTTAAICAALSVAAFSAMATDSTDTELTIIGEYTPGACTPVVTGGGIVDYGKHHNSALNPTGKSNKLVQLGRKNSTLNITCTAPTLIAVTSKDNRQSTIVALNDTSYIEKAYDTLVDMKGTKNAFGLGSAPNGQKIGAASIGIDRSNGGIHAADDTGEIPVDLIQTDHWSAATPTWKASSNGAFCSLTSCSAIERGYSVAKTGELTPVAITAVTFPLLIDAAVNDNTILGSDETIKLDGNVTISVQYL.

The first 25 residues, 1-25 (MFFKKNLTTAAICAALSVAAFSAMA), serve as a signal peptide directing secretion. Residues 213-229 (PVAITAVTFPLLIDAAV) form a helical membrane-spanning segment.

This sequence to E.coli YhcF.

Its subcellular location is the cell membrane. Involved in induction of the so-called NTR enzymes in response to nitrogen deprivation, as well as in glutamate biosynthesis. May mediate the glutamate-dependent repression of the GLT operon. This is Protein GltF (gltF) from Escherichia coli (strain K12).